A 165-amino-acid polypeptide reads, in one-letter code: Shikimate kinase (165 aa).

12–17 is a binding site for ATP; it reads GCGKST. S16 contributes to the Mg(2+) binding site. D34, R57, and G79 together coordinate substrate. R116 is an ATP binding site. R133 contributes to the substrate binding site.

Belongs to the shikimate kinase family. Monomer. Mg(2+) serves as cofactor.

The protein localises to the cytoplasm. It catalyses the reaction shikimate + ATP = 3-phosphoshikimate + ADP + H(+). It participates in metabolic intermediate biosynthesis; chorismate biosynthesis; chorismate from D-erythrose 4-phosphate and phosphoenolpyruvate: step 5/7. Its function is as follows. Catalyzes the specific phosphorylation of the 3-hydroxyl group of shikimic acid using ATP as a cosubstrate. This chain is Shikimate kinase, found in Clostridium botulinum (strain Alaska E43 / Type E3).